Reading from the N-terminus, the 99-residue chain is Large ribosomal subunit protein uL23 (99 aa).

It belongs to the universal ribosomal protein uL23 family. In terms of assembly, part of the 50S ribosomal subunit. Contacts protein L29, and trigger factor when it is bound to the ribosome.

Its function is as follows. One of the early assembly proteins it binds 23S rRNA. One of the proteins that surrounds the polypeptide exit tunnel on the outside of the ribosome. Forms the main docking site for trigger factor binding to the ribosome. The protein is Large ribosomal subunit protein uL23 of Blochmanniella floridana.